A 296-amino-acid chain; its full sequence is MISPKDFLRKNLKMIHGYPIIYTFANNWENIEQFHSRPDDIIIATYPKSGTTWVSEIVDMVLNNGDVEKCKRDFITVKVPMLEMAVPGLRTSGIEQLEKNPSPRLVKTHLPIALLPKSFWENNCKMIYLARNAKDVAVSYYHFDLMNNLEPAPGPWEEYLERFMTGNVAYGSWFNHVKSWWKKKEEHPILFLYYEDMKENPKREVQKIARFLEKNLNDEVLDKIIHHTSFEMMKDNPLVNYTHLPSTVMDHSKSSFMRKGIAGDWKNYFTVAQNEKFDVIYKKEMSGTTLQFRTEI.

A 3'-phosphoadenylyl sulfate-binding site is contributed by 48-53; sequence KSGTTW. A substrate-binding site is contributed by 107-109; the sequence is KTH. The Proton acceptor role is filled by H109. 3'-phosphoadenylyl sulfate is bound by residues R131, S139, Y194, 228 to 233, and 258 to 260; these read TSFEMM and RKG.

The protein belongs to the sulfotransferase 1 family. In terms of tissue distribution, expressed highly in the colon, kidney and small intestine of male and female dogs. Highly expressed in the jejunum and ileum of the male dog than the female dog, which displayed more expression in duodenum (at protein level).

Its subcellular location is the cytoplasm. The catalysed reaction is a phenol + 3'-phosphoadenylyl sulfate = an aryl sulfate + adenosine 3',5'-bisphosphate + H(+). The enzyme catalyses 3,3',5-triiodo-L-thyronine + 3'-phosphoadenylyl sulfate = 3,3',5-triiodo-L-thyronine sulfate + adenosine 3',5'-bisphosphate + H(+). It carries out the reaction 3,3',5'-triiodo-L-thyronine + 3'-phosphoadenylyl sulfate = 3,3',5'-triiodo-L-thyronine sulfate + adenosine 3',5'-bisphosphate + H(+). It catalyses the reaction 3,3'-diiodo-L-thyronine + 3'-phosphoadenylyl sulfate = 3,3'-diiodo-L-thyronine sulfate + adenosine 3',5'-bisphosphate + H(+). The catalysed reaction is 4-ethylphenol + 3'-phosphoadenylyl sulfate = 4-ethylphenyl sulfate + adenosine 3',5'-bisphosphate + H(+). Its function is as follows. Sulfotransferase that utilizes 3'-phospho-5'-adenylyl sulfate (PAPS) as sulfonate donor to catalyze the sulfate conjugation of dopamine, small phenols such as 1-naphthol and p-nitrophenol and thyroid hormones, including 3,3'-diiodothyronine, triidothyronine (T3) and reverse triiodothyronine (rT3). May play a role in gut microbiota-host metabolic interaction. O-sulfonates 4-ethylphenol (4-EP), a dietary tyrosine-derived metabolite produced by gut bacteria. The product 4-EPS crosses the blood-brain barrier and may negatively regulate oligodendrocyte maturation and myelination, affecting the functional connectivity of different brain regions associated with the limbic system. In Canis lupus familiaris (Dog), this protein is Sulfotransferase 1B1 (SULT1B1).